The following is a 433-amino-acid chain: Enolase (433 aa).

(2R)-2-phosphoglycerate is bound at residue Gln-163. Catalysis depends on Glu-205, which acts as the Proton donor. Positions 242, 286, and 313 each coordinate Mg(2+). (2R)-2-phosphoglycerate contacts are provided by Lys-338, Arg-367, Ser-368, and Lys-389. The Proton acceptor role is filled by Lys-338.

Belongs to the enolase family. The cofactor is Mg(2+).

The protein localises to the cytoplasm. Its subcellular location is the secreted. The protein resides in the cell surface. It carries out the reaction (2R)-2-phosphoglycerate = phosphoenolpyruvate + H2O. The protein operates within carbohydrate degradation; glycolysis; pyruvate from D-glyceraldehyde 3-phosphate: step 4/5. Functionally, catalyzes the reversible conversion of 2-phosphoglycerate (2-PG) into phosphoenolpyruvate (PEP). It is essential for the degradation of carbohydrates via glycolysis. The sequence is that of Enolase from Koribacter versatilis (strain Ellin345).